A 208-amino-acid chain; its full sequence is Cysteine-rich protein 2 (208 aa).

Positions 5-57 (CPKCDKTVYFAEKVSSLGKDWHKFCLKCERCSKTLTPGGHAEHDGKPFCHKPC) constitute an LIM zinc-binding 1 domain. An N6-acetyllysine modification is found at lysine 23. The segment at 98-119 (AEERKASGPPKGPSRASSVTTF) is disordered. Phosphoserine is present on serine 104. The LIM zinc-binding 2 domain maps to 126 to 178 (CPRCSKKVYFAEKVTSLGKDWHRPCLRCERCGKTLTPGGHAEHDGQPYCHKPC). Lysine 138 and lysine 144 each carry N6-acetyllysine.

Interacts with TGFB1I1. Widespread tissue expression; highest levels in the heart.

The polypeptide is Cysteine-rich protein 2 (CRIP2) (Homo sapiens (Human)).